A 130-amino-acid chain; its full sequence is Flagellar assembly factor FliW (130 aa).

It belongs to the FliW family. In terms of assembly, interacts with translational regulator CsrA and flagellin(s).

It localises to the cytoplasm. In terms of biological role, acts as an anti-CsrA protein, binds CsrA and prevents it from repressing translation of its target genes, one of which is flagellin. Binds to flagellin and participates in the assembly of the flagellum. The chain is Flagellar assembly factor FliW from Borrelia turicatae (strain 91E135).